The following is a 108-amino-acid chain: Guanine nucleotide-binding protein subunit gamma (108 aa).

The S-palmitoyl cysteine moiety is linked to residue cysteine 104. Cysteine 105 is modified (cysteine methyl ester). Cysteine 105 carries the S-farnesyl cysteine lipid modification. Positions 106–108 (VIS) are cleaved as a propeptide — removed in mature form.

This sequence belongs to the G protein gamma family. As to quaternary structure, g proteins are composed of 3 units, alpha, beta and gamma.

It is found in the membrane. The sequence is that of Guanine nucleotide-binding protein subunit gamma from Yarrowia lipolytica (strain CLIB 122 / E 150) (Yeast).